We begin with the raw amino-acid sequence, 385 residues long: 1-deoxy-D-xylulose 5-phosphate reductoisomerase (385 aa).

Positions 10, 11, 12, 13, and 124 each coordinate NADPH. Position 125 (K125) interacts with 1-deoxy-D-xylulose 5-phosphate. E126 is a binding site for NADPH. D150 is a Mn(2+) binding site. Residues S151, E152, S176, and H199 each contribute to the 1-deoxy-D-xylulose 5-phosphate site. E152 is a Mn(2+) binding site. G205 contacts NADPH. 1-deoxy-D-xylulose 5-phosphate-binding residues include S212, N217, K218, and E221. A Mn(2+)-binding site is contributed by E221.

Belongs to the DXR family. Requires Mg(2+) as cofactor. The cofactor is Mn(2+).

The enzyme catalyses 2-C-methyl-D-erythritol 4-phosphate + NADP(+) = 1-deoxy-D-xylulose 5-phosphate + NADPH + H(+). Its pathway is isoprenoid biosynthesis; isopentenyl diphosphate biosynthesis via DXP pathway; isopentenyl diphosphate from 1-deoxy-D-xylulose 5-phosphate: step 1/6. Its function is as follows. Catalyzes the NADPH-dependent rearrangement and reduction of 1-deoxy-D-xylulose-5-phosphate (DXP) to 2-C-methyl-D-erythritol 4-phosphate (MEP). This chain is 1-deoxy-D-xylulose 5-phosphate reductoisomerase, found in Clostridium botulinum (strain Eklund 17B / Type B).